The primary structure comprises 277 residues: 5'-nucleotidase SurE (277 aa).

Residues Asp-16, Asp-17, Ser-48, and Asn-101 each coordinate a divalent metal cation.

The protein belongs to the SurE nucleotidase family. A divalent metal cation is required as a cofactor.

It localises to the cytoplasm. It carries out the reaction a ribonucleoside 5'-phosphate + H2O = a ribonucleoside + phosphate. Nucleotidase that shows phosphatase activity on nucleoside 5'-monophosphates. This chain is 5'-nucleotidase SurE, found in Parvibaculum lavamentivorans (strain DS-1 / DSM 13023 / NCIMB 13966).